A 1058-amino-acid chain; its full sequence is Vacuolar protein sorting-associated protein 54 (1058 aa).

The stretch at 369–389 (SKKIVEVHERYEQKKKLLAKL) forms a coiled coil.

It belongs to the VPS54 family. In terms of assembly, component of the Golgi-associated retrograde protein (GARP) complex, also called VFT (VPS fifty-three) complex, composed of vps-51, vps-52, vps-53 and vps-54. Within the complex interacts with vps-52 and vps-53.

Its subcellular location is the golgi apparatus. The protein localises to the trans-Golgi network. Acts as a component of the GARP complex that is involved in retrograde transport from early and late endosomes to the trans-Golgi network (TGN). The GARP complex facilitates tethering as well as SNARE complex assembly at the Golgi. The protein is Vacuolar protein sorting-associated protein 54 of Caenorhabditis elegans.